The following is a 393-amino-acid chain: Pre-mRNA splicing factor SR-like 1 (393 aa).

A disordered region spans residues 173–393 (MNLPTKPSGS…VIKLGGSSWR (221 aa)). The segment covering 249–312 (QSRDYYSDRD…RNDYEDDRSR (64 aa)) has biased composition (basic and acidic residues). The Nuclear localization signal signature appears at 301–308 (SRRNDYED). Basic residues predominate over residues 313-325 (HDRRSRSRSRSRS). 2 stretches are compositionally biased toward basic and acidic residues: residues 329–346 (QIER…KEKS) and 356–385 (KLKD…EEVI).

It belongs to the PRP38 family. Post-translationally, phosphorylated. Mostly expressed in siliques and leaves, also present in seedlings, flowers and stems, and, at low levels, in roots.

It localises to the nucleus. May be required for pre-mRNA splicing. Confers salt tolerance to LiCl and NaCl. The sequence is that of Pre-mRNA splicing factor SR-like 1 from Arabidopsis thaliana (Mouse-ear cress).